The chain runs to 129 residues: Endocuticle structural glycoprotein SgAbd-9 (129 aa).

At Gln-1 the chain carries Pyrrolidone carboxylic acid. The Chitin-binding type R&amp;R domain occupies 28-98 (DGSYTFSYES…VGNVVAPAIS (71 aa)). A glycan (O-linked (HexNAc...) threonine) is linked at Thr-120.

In terms of biological role, component of the abdominal endocuticle. The protein is Endocuticle structural glycoprotein SgAbd-9 of Schistocerca gregaria (Desert locust).